Here is a 910-residue protein sequence, read N- to C-terminus: Protein translocase subunit SecA (910 aa).

Residues Gln-89, 107–111 (GEGKT), and Asp-502 contribute to the ATP site. Residues Cys-889, Cys-891, Cys-900, and His-901 each coordinate Zn(2+).

This sequence belongs to the SecA family. In terms of assembly, monomer and homodimer. Part of the essential Sec protein translocation apparatus which comprises SecA, SecYEG and auxiliary proteins SecDF-YajC and YidC. The cofactor is Zn(2+).

The protein resides in the cell inner membrane. It is found in the cytoplasm. The enzyme catalyses ATP + H2O + cellular proteinSide 1 = ADP + phosphate + cellular proteinSide 2.. Part of the Sec protein translocase complex. Interacts with the SecYEG preprotein conducting channel. Has a central role in coupling the hydrolysis of ATP to the transfer of proteins into and across the cell membrane, serving both as a receptor for the preprotein-SecB complex and as an ATP-driven molecular motor driving the stepwise translocation of polypeptide chains across the membrane. This is Protein translocase subunit SecA from Bartonella bacilliformis (strain ATCC 35685 / KC583 / Herrer 020/F12,63).